The following is a 522-amino-acid chain: Lysophospholipid acyltransferase LPCAT4 (522 aa).

Helical transmembrane passes span 43-63 (ILGFTLFPLRFLLAAIFLFLM) and 92-112 (HLIYLLSRTMFFMCGFHWITI). The short motif at 130–135 (HSTFFD) is the HXXXXD motif element. N-linked (GlcNAc...) asparagine glycosylation is found at N166 and N517. A disordered region spans residues 496–522 (GRRKPPHIQQNGGCSGKNNPRNQSKMD). Positions 503 to 522 (IQQNGGCSGKNNPRNQSKMD) are enriched in polar residues.

The protein belongs to the 1-acyl-sn-glycerol-3-phosphate acyltransferase family.

Its subcellular location is the endoplasmic reticulum membrane. The catalysed reaction is a 1-acyl-sn-glycero-3-phosphoethanolamine + an acyl-CoA = a 1,2-diacyl-sn-glycero-3-phosphoethanolamine + CoA. It catalyses the reaction a 1-O-(1Z-alkenyl)-sn-glycero-3-phosphoethanolamine + an acyl-CoA = a 1-O-(1Z-alkenyl)-2-acyl-sn-glycero-3-phosphoethanolamine + CoA. The enzyme catalyses a 1-acyl-sn-glycero-3-phosphocholine + an acyl-CoA = a 1,2-diacyl-sn-glycero-3-phosphocholine + CoA. It carries out the reaction a 1-O-alkyl-sn-glycero-3-phosphocholine + acetyl-CoA = a 1-O-alkyl-2-acetyl-sn-glycero-3-phosphocholine + CoA. The catalysed reaction is a 1-acyl-sn-glycero-3-phospho-L-serine + an acyl-CoA = a 1,2-diacyl-sn-glycero-3-phospho-L-serine + CoA. It functions in the pathway lipid metabolism; phospholipid metabolism. Displays acyl-CoA-dependent lysophospholipid acyltransferase activity with a subset of lysophospholipids as substrates. Prefers long chain acyl-CoAs (C16, C18) as acyl donors. The sequence is that of Lysophospholipid acyltransferase LPCAT4 (lpcat4) from Xenopus tropicalis (Western clawed frog).